A 21-amino-acid polypeptide reads, in one-letter code: Putative sperm adenylate cyclase (21 aa).

The enzyme catalyses ATP = 3',5'-cyclic AMP + diphosphate. This Mus musculus (Mouse) protein is Putative sperm adenylate cyclase.